We begin with the raw amino-acid sequence, 347 residues long: S-adenosylmethionine:tRNA ribosyltransferase-isomerase (347 aa).

It belongs to the QueA family. In terms of assembly, monomer.

Its subcellular location is the cytoplasm. The catalysed reaction is 7-aminomethyl-7-carbaguanosine(34) in tRNA + S-adenosyl-L-methionine = epoxyqueuosine(34) in tRNA + adenine + L-methionine + 2 H(+). It participates in tRNA modification; tRNA-queuosine biosynthesis. In terms of biological role, transfers and isomerizes the ribose moiety from AdoMet to the 7-aminomethyl group of 7-deazaguanine (preQ1-tRNA) to give epoxyqueuosine (oQ-tRNA). In Exiguobacterium sibiricum (strain DSM 17290 / CCUG 55495 / CIP 109462 / JCM 13490 / 255-15), this protein is S-adenosylmethionine:tRNA ribosyltransferase-isomerase.